The primary structure comprises 675 residues: MSLPKKLEEMQVEEASKLAQNLREILDRWSKLYYTKDAPEVEDYEYDEKYADLVALEEAFPEIITQDSITQRVGGEILEGFTKVTHTEPMLSMGDVFSRDELVEFDNRIQKNVGHPVDYNVELKIDGLAISLIYQDGELIQGSTRGDGNIGEDITKNLKTIKSVPQKLTRPLSIEVRGECFMPKASFAKLNAQQLEDGKPVFANPRNAAAGSLRQLNTNVTKKRDLDTFIYTVVDSNQLGAKTQHQAIQMMAELGFNTNPTQEVCANLDEVWDYIAKYEGQREDLPYGIDGIVLKVNDLSLQQELGHTVKIPRWEIAYKFPPEEAATVVRDIEWTVGRTGVVTPTAVMDPVQLAGTTVSRATLNNVDQLTAKDVHIGDTVLLHKAGDIIPEITRVVLEKRPVGISELDIPTHCPSCGKELVHLNGEVALRCINPDCPAQIVARLEHFGSRNAMNIMGLGPKQIQQLYAKNFIHHFDDLYKLTSEELSQLDGFKEKRVNNLLEAIDNSRKNSLERLINGLGIQGVGTKMARTLAEKFGTMDNLMQTTIEEFDAVDTIGETLANNLATFFQSDVAQNMIDELKAVGVNMEYLGVKPAESPDGYYKGKKVVLTGKLEQYTRNELKERLISLGADVAGSVSKKTDILIAGADAGSKLTKAQALGIEILDETEAIAKFEQ.

NAD(+)-binding positions include 43–47 (DYEYD), 92–93 (SM), and Glu-122. Catalysis depends on Lys-124, which acts as the N6-AMP-lysine intermediate. Positions 145, 179, 295, and 319 each coordinate NAD(+). Zn(2+)-binding residues include Cys-413, Cys-416, Cys-431, and Cys-436. A BRCT domain is found at 597–675 (SPDGYYKGKK…ETEAIAKFEQ (79 aa)).

The protein belongs to the NAD-dependent DNA ligase family. LigA subfamily. Mg(2+) serves as cofactor. Requires Mn(2+) as cofactor.

It carries out the reaction NAD(+) + (deoxyribonucleotide)n-3'-hydroxyl + 5'-phospho-(deoxyribonucleotide)m = (deoxyribonucleotide)n+m + AMP + beta-nicotinamide D-nucleotide.. DNA ligase that catalyzes the formation of phosphodiester linkages between 5'-phosphoryl and 3'-hydroxyl groups in double-stranded DNA using NAD as a coenzyme and as the energy source for the reaction. It is essential for DNA replication and repair of damaged DNA. In Pediococcus pentosaceus (strain ATCC 25745 / CCUG 21536 / LMG 10740 / 183-1w), this protein is DNA ligase.